Reading from the N-terminus, the 325-residue chain is D site-binding protein (325 aa).

Disordered stretches follow at residues 1 to 100 (MARP…PGLL), 124 to 198 (LEHG…DPDT), and 212 to 255 (LALS…EQKD). Gly residues predominate over residues 17-28 (GPTGAPPGGGAL). Low complexity-rich tracts occupy residues 29 to 38 (LGLRSLLQGT) and 71 to 80 (AGPADASAGA). A Phosphoserine modification is found at Ser-86. Residues 88–100 (RGRPGAAPGPGLL) are compositionally biased toward low complexity. Positions 129-153 (PPSPPPPGGPSPAPSPVRTPAPSPR) are enriched in pro residues. Residues 166-176 (PGHAPARAALG) are compositionally biased toward low complexity. Positions 221 to 236 (ETFDPRRHRFSEEELK) are enriched in basic and acidic residues. The region spanning 255–318 (DEKYWSRRYK…SHYRAVLSRY (64 aa)) is the bZIP domain. The basic motif stretch occupies residues 257 to 279 (KYWSRRYKNNEAAKRSRDARRLK). The segment at 283–297 (ISVRAAFLEKENALL) is leucine-zipper.

It belongs to the bZIP family. PAR subfamily. In terms of assembly, binds DNA as a homodimer or a heterodimer. Can form a heterodimer with TEF.

It localises to the nucleus. Functionally, this transcriptional activator recognizes and binds to the sequence 5'-RTTAYGTAAY-3' found in the promoter of genes such as albumin, CYP2A4 and CYP2A5. It is not essential for circadian rhythm generation, but modulates important clock output genes. May be a direct target for regulation by the circadian pacemaker component clock. May affect circadian period and sleep regulation. This is D site-binding protein (DBP) from Bos taurus (Bovine).